We begin with the raw amino-acid sequence, 60 residues long: Cytotoxin 4 (60 aa).

Cystine bridges form between cysteine 3/cysteine 21, cysteine 14/cysteine 38, cysteine 42/cysteine 53, and cysteine 54/cysteine 59.

The protein belongs to the three-finger toxin family. Short-chain subfamily. Type IA cytotoxin sub-subfamily. Monomer in solution; Homodimer and oligomer in the presence of negatively charged lipids forming a pore with a size ranging between 20 and 30 Angstroms. Expressed by the venom gland.

The protein resides in the secreted. Its subcellular location is the target cell membrane. Functionally, shows cytolytic activity on many different cells by forming pore in lipid membranes. In vivo, increases heart rate or kills the animal by cardiac arrest. In addition, it binds to heparin with high affinity, interacts with Kv channel-interacting protein 1 (KCNIP1) in a calcium-independent manner, and binds to integrin alpha-V/beta-3 (ITGAV/ITGB3) with moderate affinity. This chain is Cytotoxin 4, found in Naja mossambica (Mozambique spitting cobra).